A 130-amino-acid polypeptide reads, in one-letter code: Small ribosomal subunit protein uS8 (130 aa).

The protein belongs to the universal ribosomal protein uS8 family. As to quaternary structure, part of the 30S ribosomal subunit.

Functionally, one of the primary rRNA binding proteins, it binds directly to 16S rRNA central domain where it helps coordinate assembly of the platform of the 30S subunit. This Methanothermococcus thermolithotrophicus (Methanococcus thermolithotrophicus) protein is Small ribosomal subunit protein uS8.